A 547-amino-acid chain; its full sequence is Chaperonin GroEL (547 aa).

Residues 30 to 33 (TLGP), Lys51, 87 to 91 (DGTTT), Gly415, 479 to 481 (NAA), and Asp495 each bind ATP.

It belongs to the chaperonin (HSP60) family. As to quaternary structure, forms a cylinder of 14 subunits composed of two heptameric rings stacked back-to-back. Interacts with the co-chaperonin GroES.

Its subcellular location is the cytoplasm. The catalysed reaction is ATP + H2O + a folded polypeptide = ADP + phosphate + an unfolded polypeptide.. Its function is as follows. Together with its co-chaperonin GroES, plays an essential role in assisting protein folding. The GroEL-GroES system forms a nano-cage that allows encapsulation of the non-native substrate proteins and provides a physical environment optimized to promote and accelerate protein folding. This is Chaperonin GroEL from Pseudomonas paraeruginosa (strain DSM 24068 / PA7) (Pseudomonas aeruginosa (strain PA7)).